The sequence spans 433 residues: Glutamate-1-semialdehyde 2,1-aminomutase (433 aa).

The residue at position 272 (K272) is an N6-(pyridoxal phosphate)lysine.

The protein belongs to the class-III pyridoxal-phosphate-dependent aminotransferase family. HemL subfamily. As to quaternary structure, homodimer. Requires pyridoxal 5'-phosphate as cofactor.

It is found in the cytoplasm. The catalysed reaction is (S)-4-amino-5-oxopentanoate = 5-aminolevulinate. It functions in the pathway porphyrin-containing compound metabolism; protoporphyrin-IX biosynthesis; 5-aminolevulinate from L-glutamyl-tRNA(Glu): step 2/2. The protein is Glutamate-1-semialdehyde 2,1-aminomutase of Magnetococcus marinus (strain ATCC BAA-1437 / JCM 17883 / MC-1).